A 503-amino-acid chain; its full sequence is NAD-dependent protein deacetylase HST1 (503 aa).

The Deacetylase sirtuin-type domain occupies 183 to 468 (RLPNFNTIDH…SLVAKKCHWD (286 aa)). Residues 208–227 (GAGV…EGFY) and 290–293 (QNID) contribute to the NAD(+) site. The Proton acceptor role is filled by H310. Residues C318, C321, C342, and C345 each contribute to the Zn(2+) site. Residues 412–414 (GTS), 437–439 (NRD), and C454 each bind NAD(+).

It belongs to the sirtuin family. Class I subfamily. Identified in the Set3C complex with HOS2, SIF2, SNT1, CPR1, HOS4/YIL112W and SET3. Its presence is however not essential for meiotic repression by the Set3C complex. Interacts with SUM1 and RFM1. The interaction with SUM1 is mediated by RFM1. Zn(2+) is required as a cofactor.

The protein resides in the nucleus. The enzyme catalyses N(6)-acetyl-L-lysyl-[protein] + NAD(+) + H2O = 2''-O-acetyl-ADP-D-ribose + nicotinamide + L-lysyl-[protein]. NAD-dependent histone deacetylase involved in telomeric silencing. Histone deacetylase proteins act via the formation of large multiprotein complexes that are responsible for the deacetylation of lysine residues on the N-terminal part of the core histones (H2A, H2B, H3 and H4). Histone deacetylation gives a tag for epigenetic repression and plays an important role in transcriptional regulation, cell cycle progression and developmental events. Restores silencing at HMR in SIR2 mutants when overexpressed. Required to repress middle sporulation genes during vegetative growth. Acts as a sensor of NAD(+) levels and regulator of NAD(+) biosynthesis. Regulates the gene expression of de novo NAD(+) biosynthesis genes. This is NAD-dependent protein deacetylase HST1 (HST1) from Saccharomyces cerevisiae (strain ATCC 204508 / S288c) (Baker's yeast).